The sequence spans 155 residues: Small ribosomal subunit protein uS7 (155 aa).

The protein belongs to the universal ribosomal protein uS7 family. In terms of assembly, part of the 30S ribosomal subunit. Contacts proteins S9 and S11.

Its function is as follows. One of the primary rRNA binding proteins, it binds directly to 16S rRNA where it nucleates assembly of the head domain of the 30S subunit. Is located at the subunit interface close to the decoding center, probably blocks exit of the E-site tRNA. The polypeptide is Small ribosomal subunit protein uS7 (Sulfurimonas denitrificans (strain ATCC 33889 / DSM 1251) (Thiomicrospira denitrificans (strain ATCC 33889 / DSM 1251))).